Here is a 120-residue protein sequence, read N- to C-terminus: Fumarate reductase subunit D (120 aa).

The next 3 membrane-spanning stretches (helical) occupy residues 25 to 45 (FAML…LGIL), 57 to 77 (GFVT…LPMW), and 100 to 120 (IACY…VFMI).

The protein belongs to the FrdD family. In terms of assembly, part of an enzyme complex containing four subunits: a flavoprotein (FrdA), an iron-sulfur protein (FrdB), and two hydrophobic anchor proteins (FrdC and FrdD).

The protein resides in the cell inner membrane. Its function is as follows. Anchors the catalytic components of the fumarate reductase complex to the cell membrane, binds quinones. The sequence is that of Fumarate reductase subunit D from Photobacterium profundum (strain SS9).